A 358-amino-acid polypeptide reads, in one-letter code: Protein phosphatase 1 regulatory subunit 3G (358 aa).

The tract at residues 1 to 71 (MEPIGARLSL…KEEAAPQEQE (71 aa)) is disordered. Positions 11 to 29 (EAPGPAPFREAPPAEELPA) are enriched in low complexity. Ser-86 carries the phosphoserine modification. In terms of domain architecture, CBM21 spans 210–350 (AERLQRQRVC…NNAGANYTLR (141 aa)). Residues 270–280 (EPLEPQQPEAP) are compositionally biased toward low complexity. Residues 270–295 (EPLEPQQPEAPSGASEPGSGDAKKEP) are disordered.

Functionally, glycogen-targeting subunit for protein phosphatase 1 (PP1). Involved in the regulation of hepatic glycogenesis in a manner coupled to the fasting-feeding cycle and distinct from other glycogen-targeting subunits. The sequence is that of Protein phosphatase 1 regulatory subunit 3G (PPP1R3G) from Homo sapiens (Human).